A 151-amino-acid chain; its full sequence is Small ribosomal subunit protein uS9 (151 aa).

Belongs to the universal ribosomal protein uS9 family.

The protein is Small ribosomal subunit protein uS9 (RpS16) of Spodoptera frugiperda (Fall armyworm).